A 358-amino-acid chain; its full sequence is Protein FAM187B (358 aa).

The signal sequence occupies residues Met-1–Ala-17. At Gln-18 to Leu-322 the chain is on the extracellular side. The N-linked (GlcNAc...) asparagine glycan is linked to Asn-127. Residues Lys-323–Phe-343 form a helical membrane-spanning segment. Topologically, residues Arg-344–Lys-358 are cytoplasmic.

Belongs to the FAM187 family.

The protein resides in the membrane. The polypeptide is Protein FAM187B (Fam187b) (Mus musculus (Mouse)).